An 816-amino-acid chain; its full sequence is MDEDEKDRAKRASRNKSEKKRRDQFNVLIKELSSMLPGNTRKMDKTTVLEKVIGFLQKHNEVSAQTEICDIQQDWKPSFLSNEEFTQLMLEALDGFVIVVTTDGSIIYVSDSITPLLGHLPADVMDQNLLNFLPEQEHSEVYKILSSHMLVTDSPSPEFLKSDNDLEFYCHLLRGSLNPKEFPTYEYIKFVGNFRSYNNVPSPSCNGFDNTLSRPCHVPLGKDVCFIATVRLATPQFLKEMCVADEPLEEFTSRHSLEWKFLFLDHRAPPIIGYLPFEVLGTSGYNYYHIDDLELLARCHQHLMQFGKGKSCCYRFLTKGQQWIWLQTHYYITYHQWNSKPEFIVCTHSVVSYADVRVERRQELALEDPPTEAMHPSAVKEKDSSLEPPQPFNALDMGASGLPSSPSPSASSRSSHKSSHTAMSEPTSTPTKLMAENSTTALPRPATLPQELPVQGLSQAATMPTALHSSASCDLTKQLLLQSLPQTGLQSPPAPVTQFSAQFSMFQTIKDQLEQRTRILQANIRWQQEELHKIQEQLCLVQDSNVQMFLQQPAVSLSFSSTQRPAAQQQLQQRPAAPSQPQLVVNTPLQGQITSTQVTNQHLLRESNVISAQGPKPMRSSQLLPASGRSLSSLPSQFSSTASVLPPGLSLTTIAPTPQDDSQCQPSPDFGHDRQLRLLLSQPIQPMMPGSCDARQPSEVSRTGRQVKYAQSQVMFPSPDSHPTNSSASTPVLLMGQAVLHPSFPASRPSPLQPAQAQQQPPPYLQAPTSLHSEQPDSLLLSTFSQQPGTLGYAATQSTPPQPPRPSRRVSRLSES.

Basic and acidic residues predominate over residues 1–10 (MDEDEKDRAK). Positions 1-21 (MDEDEKDRAKRASRNKSEKKR) are disordered. Residues 1-61 (MDEDEKDRAK…VIGFLQKHNE (61 aa)) are sufficient for heterodimer formation with BMAL1, E-box binding and for the effect of NADPH. Positions 9-59 (AKRASRNKSEKKRRDQFNVLIKELSSMLPGNTRKMDKTTVLEKVIGFLQKH) constitute a bHLH domain. Residues 82-152 (NEEFTQLMLE…KILSSHMLVT (71 aa)) form the PAS 1 domain. Positions 119 and 171 each coordinate heme b. Positions 237-307 (FLKEMCVADE…RCHQHLMQFG (71 aa)) constitute a PAS 2 domain. In terms of domain architecture, PAC spans 311–354 (SCCYRFLTKGQQWIWLQTHYYITYHQWNSKPEFIVCTHSVVSYA). 4 disordered regions span residues 364–431 (LALE…STPT), 610–639 (ISAQ…SQFS), 685–705 (QPMM…RTGR), and 742–816 (PSFP…LSES). The span at 400–413 (SGLPSSPSPSASSR) shows a compositional bias: low complexity. A compositionally biased stretch (polar residues) spans 420–431 (HTAMSEPTSTPT). Over residues 623-639 (LLPASGRSLSSLPSQFS) the composition is skewed to low complexity. The segment covering 745–759 (PASRPSPLQPAQAQQ) has biased composition (low complexity). Positions 780–789 (LLSTFSQQPG) are enriched in polar residues. The span at 806–816 (PSRRVSRLSES) shows a compositional bias: basic residues.

As to quaternary structure, component of the circadian clock oscillator which includes the CRY proteins, CLOCK or NPAS2, BMAL1 or BMAL2, CSNK1D and/or CSNK1E, TIMELESS and the PER proteins. Efficient DNA binding requires dimerization with another bHLH protein. Interacts with NCOA3, KAT2B and CREBBP. Forms a heterodimer with BMAL1 and this heterodimerization is required for E-box-dependent transactivation. Interacts with EP300. Heme serves as cofactor. As to expression, expressed in the retinal ganglion cells (at protein level). Expressed in the hypothalamic suprachiasmatic nuclei (SCN) of the brain. Also found in spinal cord, and to a lesser extent in colon, small intestine and uterus. Exhibits a diurnal variation in its expression in the brain.

Its subcellular location is the nucleus. Carbon monoxide (CO) and the redox state of the cell can modulate the transcriptional activity of the NPAS2-BMAL1 heterodimer. NADH and NADPH enhance the DNA-binding activity of the heterodimer whereas CO binds the heme group in NPAS2 and inhibits the DNA-binding activity of the heterodimer. Functionally, transcriptional activator which forms a core component of the circadian clock. The circadian clock, an internal time-keeping system, regulates various physiological processes through the generation of approximately 24 hour circadian rhythms in gene expression, which are translated into rhythms in metabolism and behavior. It is derived from the Latin roots 'circa' (about) and 'diem' (day) and acts as an important regulator of a wide array of physiological functions including metabolism, sleep, body temperature, blood pressure, endocrine, immune, cardiovascular, and renal function. Consists of two major components: the central clock, residing in the suprachiasmatic nucleus (SCN) of the brain, and the peripheral clocks that are present in nearly every tissue and organ system. Both the central and peripheral clocks can be reset by environmental cues, also known as Zeitgebers (German for 'timegivers'). The predominant Zeitgeber for the central clock is light, which is sensed by retina and signals directly to the SCN. The central clock entrains the peripheral clocks through neuronal and hormonal signals, body temperature and feeding-related cues, aligning all clocks with the external light/dark cycle. Circadian rhythms allow an organism to achieve temporal homeostasis with its environment at the molecular level by regulating gene expression to create a peak of protein expression once every 24 hours to control when a particular physiological process is most active with respect to the solar day. Transcription and translation of core clock components (CLOCK, NPAS2, BMAL1, BMAL2, PER1, PER2, PER3, CRY1 and CRY2) plays a critical role in rhythm generation, whereas delays imposed by post-translational modifications (PTMs) are important for determining the period (tau) of the rhythms (tau refers to the period of a rhythm and is the length, in time, of one complete cycle). A diurnal rhythm is synchronized with the day/night cycle, while the ultradian and infradian rhythms have a period shorter and longer than 24 hours, respectively. Disruptions in the circadian rhythms contribute to the pathology of cardiovascular diseases, cancer, metabolic syndromes and aging. A transcription/translation feedback loop (TTFL) forms the core of the molecular circadian clock mechanism. Transcription factors, CLOCK or NPAS2 and BMAL1 or BMAL2, form the positive limb of the feedback loop, act in the form of a heterodimer and activate the transcription of core clock genes and clock-controlled genes (involved in key metabolic processes), harboring E-box elements (5'-CACGTG-3') within their promoters. The core clock genes: PER1/2/3 and CRY1/2 which are transcriptional repressors form the negative limb of the feedback loop and interact with the CLOCK|NPAS2-BMAL1|BMAL2 heterodimer inhibiting its activity and thereby negatively regulating their own expression. This heterodimer also activates nuclear receptors NR1D1/2 and RORA/B/G, which form a second feedback loop and which activate and repress BMAL1 transcription, respectively. The NPAS2-BMAL1 heterodimer positively regulates the expression of MAOA, F7 and LDHA and modulates the circadian rhythm of daytime contrast sensitivity by regulating the rhythmic expression of adenylate cyclase type 1 (ADCY1) in the retina. NPAS2 plays an important role in sleep homeostasis and in maintaining circadian behaviors in normal light/dark and feeding conditions and in the effective synchronization of feeding behavior with scheduled food availability. Regulates the gene transcription of key metabolic pathways in the liver and is involved in DNA damage response by regulating several cell cycle and DNA repair genes. Controls the circadian rhythm of NR0B2 expression by binding rhythmically to its promoter. Mediates the diurnal variation in the expression of GABARA1 receptor in the brain and contributes to the regulation of anxiety-like behaviors and GABAergic neurotransmission in the ventral striatum. The polypeptide is Neuronal PAS domain-containing protein 2 (Npas2) (Mus musculus (Mouse)).